The sequence spans 113 residues: AGDAAVGEKIAKAKCTACHDLNKGGPIKVGPPLFGVFGRTTGTFAGYSYSPGYTVMGQKGHTWDDNALKAYLLDPKGYVQAKSGDPKANSKMIFRLEKDDDVANVIAYLHTMK.

Heme c-binding residues include Cys15, Cys18, His19, and Met92.

It belongs to the cytochrome c family. In terms of processing, binds 1 heme c group covalently per subunit.

Its function is as follows. Cytochrome c2 is found mainly in purple, non-sulfur, photosynthetic bacteria where it functions as the electron donor to the oxidized bacteriochlorophyll in the photophosphorylation pathway. However, it may also have a role in the respiratory chain and is found in some non-photosynthetic bacteria. This is Cytochrome c2 from Pararhodospirillum photometricum (Rhodospirillum photometricum).